Here is a 971-residue protein sequence, read N- to C-terminus: Endoplasmic reticulum calcium ATPase srcA (971 aa).

At 1–25 (MNNEALAEDPPTPLWELVLEQFKDQ) the chain is on the cytoplasmic side. Residues 26–46 (LVLILLGSAAVSFVLALFEEG) traverse the membrane as a helical segment. The Lumenal segment spans residues 47–49 (DDW). Residues 50-70 (TAFVDPVVILTILILNAVVGV) traverse the membrane as a helical segment. The Cytoplasmic portion of the chain corresponds to 71-217 (TQESSAEKAI…PTPLKQKLND (147 aa)). The chain crosses the membrane as a helical span at residues 218–238 (FGDMLAKVITVICVLVWLINV). Residues 239–262 (EHFNDPAHGGWAKGAIYYLKIAVS) are Lumenal-facing. The chain crosses the membrane as a helical span at residues 263–283 (LGVAAIPEGLAVVITTCLALG). Ca(2+) is bound by residues Val-265, Ala-266, Ile-268, and Glu-270. Residues 284–718 (TRKMAAKNAV…GRSIYSNTQQ (435 aa)) are Cytoplasmic-facing. The active-site 4-aspartylphosphate intermediate is the Asp-312. Mg(2+)-binding residues include Asp-312 and Thr-314. ATP contacts are provided by Thr-314, Glu-402, Arg-453, Lys-473, Arg-518, Arg-637, and Lys-643. Asp-662 is a binding site for Mg(2+). Residue Asn-665 coordinates ATP. Residues 719-741 (FIRYLISSNIGEVVSIFLTAALG) traverse the membrane as a helical segment. Residues Asn-727 and Glu-730 each coordinate Ca(2+). Over 742-750 (MPEALIPVQ) the chain is Lumenal. The chain crosses the membrane as a helical span at residues 751 to 770 (LLWVNLVTDGLPATALSFNP). Residues Asn-755, Thr-758, and Asp-759 each coordinate Ca(2+). The Cytoplasmic portion of the chain corresponds to 771 to 795 (PDHDVMRRAPRKRDEPLVGGWLLFR). A helical transmembrane segment spans residues 796 to 816 (YLAIGTYVGAATVFGYIWWFV). Residues 817-854 (YNPEGPQISFWQLSHFHKCSAQFPEIGCEMFSNEMSRS) are Lumenal-facing. A helical membrane pass occupies residues 855-875 (ASTVSLSILVVIEMLNAMNAL). Glu-867 provides a ligand contact to Ca(2+). The Cytoplasmic portion of the chain corresponds to 876–891 (SSSESLLAFPLWNNMM). The chain crosses the membrane as a helical span at residues 892–912 (LVYAIILSMTLHFAILYIPFL). At 913–917 (QTLFS) the chain is on the lumenal side. Residues 918–938 (ILPLNWTEWKAVLAISAPVVA) traverse the membrane as a helical segment. Residues 939–971 (IDELLKYAERRLYTLPAIAGEQQNGVAFKPKKA) are Cytoplasmic-facing.

It belongs to the cation transport ATPase (P-type) (TC 3.A.3) family. The cofactor is Mg(2+).

The protein resides in the endoplasmic reticulum membrane. The catalysed reaction is Ca(2+)(in) + ATP + H2O = Ca(2+)(out) + ADP + phosphate + H(+). Magnesium-dependent enzyme catalyzes the hydrolysis of ATP coupled with the translocation of calcium from the cytosol to the endoplasmic reticulum lumen. Its activity is coupled to the unfolded protein response (UPR) and Ca(2+) import into the endoplasmioc reticulum is important for redox homeostasis, virulence, cell wall biosynthesis, and resistance to antifungal compounds that inhibit Ca2+ signaling. With pmrA, promotes radial growth and conidiation. The sequence is that of Endoplasmic reticulum calcium ATPase srcA (srcA) from Aspergillus fumigatus (strain ATCC MYA-4609 / CBS 101355 / FGSC A1100 / Af293) (Neosartorya fumigata).